Consider the following 217-residue polypeptide: MOB kinase activator 3A (217 aa).

Zn(2+) contacts are provided by C83, C88, H165, and H170.

This sequence belongs to the MOB1/phocein family.

In terms of biological role, may regulate the activity of kinases. This is MOB kinase activator 3A (MOB3A) from Homo sapiens (Human).